Reading from the N-terminus, the 503-residue chain is Interferon regulatory factor 7 (503 aa).

A DNA-binding region (IRF tryptophan pentad repeat) is located at residues arginine 11–arginine 126. The interval arginine 69 to arginine 88 is disordered. Lysine 92 carries the post-translational modification N6-acetyllysine; by KAT2A and KAT2B. Disordered regions lie at residues glycine 133–glycine 156 and threonine 242–alanine 277. The segment covering alanine 146–glycine 156 has biased composition (pro residues). Positions proline 284–tryptophan 456 are necessary for the interaction with NMI. Lysine 375 participates in a covalent cross-link: Glycyl lysine isopeptide (Lys-Gly) (interchain with G-Cter in ubiquitin). Glycyl lysine isopeptide (Lys-Gly) (interchain with G-Cter in SUMO) cross-links involve residues lysine 444 and lysine 446. Residues serine 471, serine 472, and serine 475 each carry the phosphoserine modification. A phosphoserine; by TBK1 and IKKE mark is found at serine 477 and serine 479. 3 positions are modified to phosphoserine: serine 483, serine 484, and serine 487.

The protein belongs to the IRF family. Monomer. Homodimer; phosphorylation-induced. Heterodimer with IRF3. Interacts with TICAM1 and TICAM2. Interacts with MYD88 and TRAF6. Interacts with TRIM35. Interacts with NMI; the interaction is direct and leads to the inhibition of IRF7-mediated type I IFN production. Interacts with GBP4; preventing interaction between TRAF6 and IRF7, resulting in impaired TRAF6-mediated IRF7 ubiquitination. In terms of assembly, (Microbial infection) Interacts with Epstein-Barr virus LF2 and LMP1. As to quaternary structure, (Microbial infection) Interacts with rotavirus A NSP1; this interaction leads to the proteasome-dependent degradation of IRF7. (Microbial infection) Interacts with human herpes virus 8/HHV-8 proteins ORF45 and vIRF-1. In terms of assembly, (Microbial infection) Interacts with human T-cell leukemia virus 1/HTLV-1 protein HBZ. As to quaternary structure, (Microbial infection) Interacts with Seneca Valley virus protease 3C; this interaction is involved in the suppression of IRF7 expression and phosphorylation by the virus. (Microbial infection) Interacts with ebolavirus VP35; this interaction mediates the sumoylation of IRF7 and contributes to the viral inhibition of IFN-type I production. In terms of assembly, (Microbial infection) Interacts with severe fever with thrombocytopenia syndrome virus (SFTSV) NSs; this interaction sequesters IRF7 in NSs-induced cytoplasmic inclusion bodies. As to quaternary structure, (Microbial infection) Interacts with herpes virus 8/HHV-8 protein vIRF-4; this interaction prevents IRF7 dimerization and subsequent activation. (Microbial infection) Interacts with human metapneumovirus protein M2-2; this interaction prevents IRF7 phosphorlyation and subsequent TLR7/9-dependent IFN-alpha induction. In terms of processing, acetylation inhibits its DNA-binding ability and activity. In response to a viral infection, phosphorylated on Ser-477 and Ser-479 by TBK1 and IKBKE1. Phosphorylation, and subsequent activation is inhibited by vaccinia virus protein E3. In TLR7- and TLR9-mediated signaling pathway, phosphorylated by IRAK1. Post-translationally, TRAF6-mediated ubiquitination is required for IRF7 activation. TRIM35 mediates IRF7 'Lys-48'-linked polyubiquitination and subsequent proteasomal degradation. Ubiquitinated by UBE3C, leading to its degradation. In terms of processing, sumoylated by TRIM28, which inhibits its transactivation activity. (Microbial infection) Cleaved and inactivated by the protease 3C of enterovirus 71 allowing the virus to disrupt the host type I interferon production. Post-translationally, (Microbial infection) Cleaved and inactivated by the protease 3C of human enterovirus 68D (EV68) allowing the virus to disrupt the host type I interferon production. In terms of processing, 'Lys-48'-linked polyubiquitination and subsequent proteasomal degradation is NMI-dependent in response to Sendai virus infection. 'Lys-63'-linked ubiquitination by NEURL3 promotes IRF7 activation. Expressed predominantly in spleen, thymus and peripheral blood leukocytes.

The protein localises to the nucleus. It is found in the cytoplasm. Its activity is regulated as follows. In the absence of viral infection, maintained as a monomer in an autoinhibited state and phosphorylation disrupts this autoinhibition leading to the liberation of the DNA-binding and dimerization activities and its nuclear localization where it can activate type I IFN and ISG genes. Its function is as follows. Key transcriptional regulator of type I interferon (IFN)-dependent immune responses and plays a critical role in the innate immune response against DNA and RNA viruses. Regulates the transcription of type I IFN genes (IFN-alpha and IFN-beta) and IFN-stimulated genes (ISG) by binding to an interferon-stimulated response element (ISRE) in their promoters. Can efficiently activate both the IFN-beta (IFNB) and the IFN-alpha (IFNA) genes and mediate their induction via both the virus-activated, MyD88-independent pathway and the TLR-activated, MyD88-dependent pathway. Induces transcription of ubiquitin hydrolase USP25 mRNA in response to lipopolysaccharide (LPS) or viral infection in a type I IFN-dependent manner. Required during both the early and late phases of the IFN gene induction but is more critical for the late than for the early phase. Exists in an inactive form in the cytoplasm of uninfected cells and following viral infection, double-stranded RNA (dsRNA), or toll-like receptor (TLR) signaling, becomes phosphorylated by IKBKE and TBK1 kinases. This induces a conformational change, leading to its dimerization and nuclear localization where along with other coactivators it can activate transcription of the type I IFN and ISG genes. Can also play a role in regulating adaptive immune responses by inducing PSMB9/LMP2 expression, either directly or through induction of IRF1. Binds to the Q promoter (Qp) of EBV nuclear antigen 1 a (EBNA1) and may play a role in the regulation of EBV latency. Can activate distinct gene expression programs in macrophages and regulate the anti-tumor properties of primary macrophages. The polypeptide is Interferon regulatory factor 7 (IRF7) (Homo sapiens (Human)).